Here is a 644-residue protein sequence, read N- to C-terminus: 3-isopropylmalate dehydratase (644 aa).

Residues cysteine 400, cysteine 460, and cysteine 463 each coordinate [4Fe-4S] cluster. The segment at 521–568 is disordered; sequence SEIPGTPKQSPRQEVVAEFESEEDDVDSSSVDSAPVATPPSTGDSAGM. A compositionally biased stretch (acidic residues) spans 537–547; that stretch reads AEFESEEDDVD.

It belongs to the aconitase/IPM isomerase family. In terms of assembly, monomer. [4Fe-4S] cluster serves as cofactor.

It catalyses the reaction (2R,3S)-3-isopropylmalate = (2S)-2-isopropylmalate. Its pathway is amino-acid biosynthesis; L-leucine biosynthesis; L-leucine from 3-methyl-2-oxobutanoate: step 2/4. In terms of biological role, catalyzes the isomerization between 2-isopropylmalate and 3-isopropylmalate, via the formation of 2-isopropylmaleate. The protein is 3-isopropylmalate dehydratase (LEUA) of Mucor circinelloides f. lusitanicus (Mucor racemosus var. lusitanicus).